We begin with the raw amino-acid sequence, 94 residues long: Long neurotoxin LNTX8 (94 aa).

Positions 1–21 (MKTLLLTLVVVTIMCLDLGYT) are cleaved as a signal peptide. 5 disulfide bridges follow: Cys-24–Cys-43, Cys-36–Cys-64, Cys-49–Cys-53, Cys-68–Cys-79, and Cys-80–Cys-85.

The protein belongs to the three-finger toxin family. Long-chain subfamily. Type II alpha-neurotoxin sub-subfamily. Expressed by the venom gland.

The protein localises to the secreted. Functionally, binds with high affinity to muscular (alpha-1/CHRNA1) and neuronal (alpha-7/CHRNA7) nicotinic acetylcholine receptor (nAChR) and inhibits acetylcholine from binding to the receptor, thereby impairing neuromuscular and neuronal transmission. The chain is Long neurotoxin LNTX8 from Ophiophagus hannah (King cobra).